Consider the following 268-residue polypeptide: 5'-nucleotidase SurE (268 aa).

4 residues coordinate a divalent metal cation: Asp24, Asp25, Ser55, and Asn111.

Belongs to the SurE nucleotidase family. It depends on a divalent metal cation as a cofactor.

Its subcellular location is the cytoplasm. It catalyses the reaction a ribonucleoside 5'-phosphate + H2O = a ribonucleoside + phosphate. Nucleotidase that shows phosphatase activity on nucleoside 5'-monophosphates. This is 5'-nucleotidase SurE from Deinococcus radiodurans (strain ATCC 13939 / DSM 20539 / JCM 16871 / CCUG 27074 / LMG 4051 / NBRC 15346 / NCIMB 9279 / VKM B-1422 / R1).